The sequence spans 1353 residues: Adenylate cyclase type 9 (1353 aa).

Disordered regions lie at residues 1-27 (MASSPHQQLLHHHSTEVSCDSSGDSNS) and 51-73 (SSSCSSSGDSGGLPRRVGGGGRL). Residues 1-117 (MASSPHQQLL…CFPQTQRRFR (117 aa)) are Cytoplasmic-facing. Residues 16 to 27 (EVSCDSSGDSNS) are compositionally biased toward polar residues. The span at 51-66 (SSSCSSSGDSGGLPRR) shows a compositional bias: low complexity. A helical transmembrane segment spans residues 118-138 (YALFYVGFACLLWSIYFAVHM). Residues 139–141 (KSK) lie on the Extracellular side of the membrane. A helical transmembrane segment spans residues 142–162 (VIVMVVPALCFLVVCVGFFLF). Residues 163–171 (TFTKLYARH) are Cytoplasmic-facing. Residues 172–192 (YAWTSLALTLLVFALTLAAQF) form a helical membrane-spanning segment. Residues 193 to 215 (QVWTPLSGRVDSSNHTLTATPAD) are Extracellular-facing. Asn-206 carries an N-linked (GlcNAc...) asparagine glycan. The helical transmembrane segment at 216–235 (TCLSQVGSFSICIEVLLLLY) threads the bilayer. The Cytoplasmic portion of the chain corresponds to 236 to 241 (TVMQLP). A helical membrane pass occupies residues 242–259 (LYLSLFLGVVYSVLFETF). The Extracellular portion of the chain corresponds to 260 to 280 (GYHFRNEDCYPSPGPGALHWE). The chain crosses the membrane as a helical span at residues 281 to 301 (LLSRALLHVCIHAIGIHLFVM). The Cytoplasmic segment spans residues 302–786 (SQVRSRSTFL…VKTFASATFS (485 aa)). The disordered stretch occupies residues 349–375 (QGDEESENSVKRHATSSPKNRKKKSSI). The span at 359–374 (KRHATSSPKNRKKKSS) shows a compositional bias: basic residues. Mg(2+)-binding residues include Asp-399, Ile-400, and Asp-443. Residues 399–404 (DIVGFT), 441–443 (LGD), and Arg-487 contribute to the ATP site. Disordered regions lie at residues 596-615 (DSRESSGPRGQGTASPGSVS) and 641-685 (SEAG…EEKL). 2 positions are modified to phosphoserine: Ser-610 and Ser-613. Polar residues predominate over residues 661 to 676 (STKASGGPNSKTQNGL). A phosphoserine mark is found at Ser-688, Ser-691, and Ser-706. A helical transmembrane segment spans residues 787 to 807 (SLLDVFLSTTVFLILSITCFL). Topologically, residues 808–818 (KYGATATPPPP) are extracellular. A helical transmembrane segment spans residues 819 to 839 (AALAVFGADLLLEVLSLIVSI). Topologically, residues 840–867 (RMVFFLEDVMTCTKWLLEWIAGWLPRHC) are cytoplasmic. The helical transmembrane segment at 868 to 888 (IGAILVSLPALAVYSHITSEF) threads the bilayer. The Extracellular portion of the chain corresponds to 889–891 (ETN). Residues 892–912 (IHVTMFTGSAVLVAVVHYCNF) traverse the membrane as a helical segment. The Cytoplasmic segment spans residues 913–920 (CQLSSWMR). A helical transmembrane segment spans residues 921 to 941 (SSLATIVGAGLLLLLHISLCQ). The Extracellular segment spans residues 942–975 (DSSIVMSPLDSAQNFSAQRNPCNSSVLQDGRRPA). N-linked (GlcNAc...) asparagine glycans are attached at residues Asn-955 and Asn-964. The chain crosses the membrane as a helical span at residues 976–996 (SLIGKELILTFFLLLLLVWFL). Residues 997 to 1353 (NREFEVSYRL…LSKLNVSKSV (357 aa)) are Cytoplasmic-facing. Residues Lys-1108, 1185–1187 (DIW), 1192–1196 (NIASR), and Lys-1232 each bind ATP. Ser-1257, Ser-1259, Ser-1295, Ser-1307, and Ser-1332 each carry phosphoserine. The segment at 1290-1314 (KASLGSDDSTQAKEARLSSKRSWRE) is disordered. The segment covering 1299 to 1314 (TQAKEARLSSKRSWRE) has biased composition (basic and acidic residues).

The protein belongs to the adenylyl cyclase class-4/guanylyl cyclase family. Requires Mg(2+) as cofactor. Mn(2+) serves as cofactor. In terms of tissue distribution, detected in brain, spleen, lung, liver and testis (at protein level). Detected in brain, especially in hippocampus, cerebellum and neocortex. Found in decreasing order in skeletal muscle, heart, adrenal gland, ovary and brain; and to a lesser extent, in kidney, liver, testis, lung, thymus and spleen.

Its subcellular location is the cell membrane. It carries out the reaction ATP = 3',5'-cyclic AMP + diphosphate. Its activity is regulated as follows. Insensitive to calcium/calmodulin, forskolin and somatostatin. Stimulated by beta-adrenergic receptor activation. Activity is down-regulated by calcium/calcineurin. Functionally, adenylyl cyclase that catalyzes the formation of the signaling molecule cAMP in response to activation of G protein-coupled receptors. Contributes to signaling cascades activated by CRH (corticotropin-releasing factor), corticosteroids and by beta-adrenergic receptors. This is Adenylate cyclase type 9 (Adcy9) from Mus musculus (Mouse).